Reading from the N-terminus, the 455-residue chain is Beta-1,3-galactosyl-O-glycosyl-glycoprotein beta-1,6-N-acetylglucosaminyltransferase 4 (455 aa).

At Met1–Gln13 the chain is on the cytoplasmic side. Residues Gln14–Val34 form a helical; Signal-anchor for type II membrane protein membrane-spanning segment. Topologically, residues Gly35–Leu455 are lumenal. Residue Asn73 is glycosylated (N-linked (GlcNAc...) asparagine). 4 disulfide bridges follow: Cys74/Cys228, Cys162/Cys383, Cys183/Cys210, and Cys392/Cys424. 2 N-linked (GlcNAc...) asparagine glycosylation sites follow: Asn287 and Asn382.

This sequence belongs to the glycosyltransferase 14 family.

It localises to the golgi apparatus membrane. The enzyme catalyses a 3-O-[beta-D-galactosyl-(1-&gt;3)-N-acetyl-alpha-D-galactosaminyl]-L-seryl-[protein] + UDP-N-acetyl-alpha-D-glucosamine = 3-O-{beta-D-galactosyl-(1-&gt;3)-[N-acetyl-beta-D-glucosaminyl-(1-&gt;6)]-N-acetyl-alpha-D-galactosaminyl}-L-seryl-[protein] + UDP + H(+). The catalysed reaction is a 3-O-[beta-D-galactosyl-(1-&gt;3)-N-acetyl-alpha-D-galactosaminyl]-L-threonyl-[protein] + UDP-N-acetyl-alpha-D-glucosamine = a 3-O-{beta-D-galactosyl-(1-&gt;3)-[N-acetyl-beta-D-glucosaminyl-(1-&gt;6)]-N-acetyl-alpha-D-galactosaminyl}-L-threonyl-[protein] + UDP + H(+). The protein operates within protein modification; protein glycosylation. Its function is as follows. Glycosyltransferase that mediates core 2 O-glycan branching, an important step in mucin-type biosynthesis. Does not have core 4 O-glycan or I-branching enzyme activity. This Mus musculus (Mouse) protein is Beta-1,3-galactosyl-O-glycosyl-glycoprotein beta-1,6-N-acetylglucosaminyltransferase 4 (Gcnt4).